Here is a 157-residue protein sequence, read N- to C-terminus: Transcriptional repressor NrdR (157 aa).

A disordered region spans residues 1–26 (MRCPKCGGSKSSVIDSRQAEDGNTIR). A zinc finger lies at 3 to 34 (CPKCGGSKSSVIDSRQAEDGNTIRRRRECEDC). The span at 17 to 26 (RQAEDGNTIR) shows a compositional bias: basic and acidic residues. Positions 49–139 (LVVVKKDGTR…VYRSFKDVGE (91 aa)) constitute an ATP-cone domain.

This sequence belongs to the NrdR family. It depends on Zn(2+) as a cofactor.

In terms of biological role, negatively regulates transcription of bacterial ribonucleotide reductase nrd genes and operons by binding to NrdR-boxes. The protein is Transcriptional repressor NrdR of Streptococcus gordonii (strain Challis / ATCC 35105 / BCRC 15272 / CH1 / DL1 / V288).